The chain runs to 108 residues: Nucleoid-associated protein PLES_37951 (108 aa).

2 disordered regions span residues 1–25 and 87–108; these read MMKG…KMQE and NQEK…KMPF. Residues 87–98 show a composition bias toward polar residues; it reads NQEKMSGFTSGM.

This sequence belongs to the YbaB/EbfC family. In terms of assembly, homodimer.

It localises to the cytoplasm. Its subcellular location is the nucleoid. In terms of biological role, binds to DNA and alters its conformation. May be involved in regulation of gene expression, nucleoid organization and DNA protection. The protein is Nucleoid-associated protein PLES_37951 of Pseudomonas aeruginosa (strain LESB58).